The sequence spans 654 residues: Collagen alpha-1(XXV) chain (654 aa).

Residues 1 to 26 (MLLKKHAGKGGGREPRSEDPTPAEQH) form a disordered region. Topologically, residues 1–33 (MLLKKHAGKGGGREPRSEDPTPAEQHCARTMPP) are cytoplasmic. The helical; Signal-anchor for type II membrane protein transmembrane segment at 34–54 (CAVLAALLSVVAVVSCLYLGV) threads the bilayer. Topologically, residues 55–654 (KTNDLQARIA…GLPMPGCWQK (600 aa)) are extracellular. E113 is subject to Pyrrolidone carboxylic acid (Glu). A disordered region spans residues 116–168 (SECNCPAGPPGKRGKRGRRGESGPPGQPGPQGPPGPKGDKGEQGDQGPRMVFP). The 44-residue stretch at 121–164 (PAGPPGKRGKRGRRGESGPPGQPGPQGPPGPKGDKGEQGDQGPR) folds into the Collagen-like 1 domain. The segment covering 140–151 (PGQPGPQGPPGP) has biased composition (pro residues). Residues 181–188 (LIKRRLIK) form an interaction with amyloid-beta peptide region. Disordered stretches follow at residues 189–426 (GDQG…QGAT) and 445–654 (LTVT…CWQK). Collagen-like domains lie at 192–247 (GQAG…QKGS), 249–308 (GAPG…PGSS), 311–370 (GIKG…AGPP), 372–425 (RGER…DQGA), and 447–505 (VTGP…PGLP). Pro residues predominate over residues 196–208 (PPGPPGPPGPRGP). The segment covering 230 to 245 (PGEQGLMGPLGPPGQK) has biased composition (low complexity). The segment covering 280-290 (EPGEQGEKGDA) has biased composition (basic and acidic residues). Over residues 336-358 (LPGIKGEPGFIGPQGEPGLPGLP) the composition is skewed to low complexity. Composition is skewed to basic and acidic residues over residues 361-377 (KGER…ERGE) and 398-407 (SKGDRGEKGD). Residues 457–466 (QGLQGPKGEQ) show a composition bias toward low complexity. The segment covering 494–503 (GEKGGIGLPG) has biased composition (gly residues). The segment covering 517–527 (SGMPGPQGPSI) has biased composition (low complexity). Pro residues predominate over residues 528-543 (IGPPGPPGPHGPPGPM). A Collagen-like 7 domain is found at 571–630 (GEKGAMGEPGPRGPYGLPGKDGEPGLDGFPGPRGEKGDLGEKGEKGFRGVKGEKGEPGQP). Residues 603 to 626 (RGEKGDLGEKGEKGFRGVKGEKGE) are compositionally biased toward basic and acidic residues.

In terms of assembly, forms homodimers and homotrimers. Binds to the fibrillized forms of amyloid-beta protein 40 (beta-APP40) and amyloid-beta protein 42 (beta-APP42). Found associated with beta-APP42 more frequently than with beta-APP40. In terms of processing, undergoes proteolytic cleavage by furin protease to yield the soluble collagen-like Alzheimer amyloid plaque component. Glycosylated. Post-translationally, hydroxylated on 11% of proline residues and 49% of lysine residues. In terms of tissue distribution, expressed predominantly in brain. Deposited preferentially in primitive or neuritic amyloid plaques which are typical of Alzheimer disease.

The protein localises to the membrane. Its function is as follows. Inhibits fibrillization of amyloid-beta peptide during the elongation phase. Has also been shown to assemble amyloid fibrils into protease-resistant aggregates. Binds heparin. In Homo sapiens (Human), this protein is Collagen alpha-1(XXV) chain.